The primary structure comprises 144 residues: Transcription antitermination protein NusB (144 aa).

This sequence belongs to the NusB family.

Involved in transcription antitermination. Required for transcription of ribosomal RNA (rRNA) genes. Binds specifically to the boxA antiterminator sequence of the ribosomal RNA (rrn) operons. The sequence is that of Transcription antitermination protein NusB from Haemophilus influenzae (strain PittEE).